Consider the following 321-residue polypeptide: HPr kinase/phosphorylase (321 aa).

Residues histidine 143 and lysine 164 contribute to the active site. 158–165 (GKSGVGKS) is an ATP binding site. Serine 165 provides a ligand contact to Mg(2+). Aspartate 182 acts as the Proton acceptor; for phosphorylation activity. Proton donor; for dephosphorylation activity in catalysis. The important for the catalytic mechanism of both phosphorylation and dephosphorylation stretch occupies residues 206–215 (MEIRGLGILN). Glutamate 207 is a Mg(2+) binding site. The active site involves arginine 248. The tract at residues 269-274 (PVRPGR) is important for the catalytic mechanism of dephosphorylation.

Belongs to the HPrK/P family. In terms of assembly, homohexamer. Mg(2+) serves as cofactor.

It carries out the reaction [HPr protein]-L-serine + ATP = [HPr protein]-O-phospho-L-serine + ADP + H(+). It catalyses the reaction [HPr protein]-O-phospho-L-serine + phosphate + H(+) = [HPr protein]-L-serine + diphosphate. Catalyzes the ATP- as well as the pyrophosphate-dependent phosphorylation of a specific serine residue in HPr, a phosphocarrier protein of the phosphoenolpyruvate-dependent sugar phosphotransferase system (PTS). HprK/P also catalyzes the pyrophosphate-producing, inorganic phosphate-dependent dephosphorylation (phosphorolysis) of seryl-phosphorylated HPr (P-Ser-HPr). The chain is HPr kinase/phosphorylase from Leptospira interrogans serogroup Icterohaemorrhagiae serovar copenhageni (strain Fiocruz L1-130).